The primary structure comprises 189 residues: Lipid A acyltransferase PagP (189 aa).

The first 23 residues, Met1 to Ala23, serve as a signal peptide directing secretion. Active-site residues include His61, Asp104, and Ser105.

The protein belongs to the lipid A palmitoyltransferase family. In terms of assembly, homodimer.

It localises to the cell outer membrane. It carries out the reaction a lipid A + a 1,2-diacyl-sn-glycero-3-phosphocholine = a hepta-acyl lipid A + a 2-acyl-sn-glycero-3-phosphocholine. It catalyses the reaction a lipid IVA + a 1,2-diacyl-sn-glycero-3-phosphocholine = a lipid IVB + a 2-acyl-sn-glycero-3-phosphocholine. The catalysed reaction is a lipid IIA + a 1,2-diacyl-sn-glycero-3-phosphocholine = a lipid IIB + a 2-acyl-sn-glycero-3-phosphocholine. Its function is as follows. Transfers a fatty acid residue from the sn-1 position of a phospholipid to the N-linked hydroxyfatty acid chain on the proximal unit of lipid A or its precursors. This chain is Lipid A acyltransferase PagP, found in Erwinia amylovora (strain ATCC 49946 / CCPPB 0273 / Ea273 / 27-3).